Reading from the N-terminus, the 336-residue chain is CMP-sialic acid transporter (336 aa).

Residues 1-9 are Cytoplasmic-facing; sequence MAQARENVS. A helical membrane pass occupies residues 10–30; sequence LFFKLYCLAVMTLVAAAYTVA. The Lumenal segment spans residues 31–45; it reads LRYTRTTAKELYFST. A helical membrane pass occupies residues 46-64; the sequence is TAVCVTEVIKLLISVGLLA. Lys-55 lines the CMP-N-acetyl-beta-neuraminate pocket. The Cytoplasmic portion of the chain corresponds to 65–87; that stretch reads KETGSLGRFKASLSENVLGSPKE. The chain crosses the membrane as a helical span at residues 88 to 108; the sequence is LMKLSVPSLVYAVQNNMAFLA. Residue 101–102 coordinates CMP-N-acetyl-beta-neuraminate; that stretch reads QN. The Lumenal portion of the chain corresponds to 109–114; it reads LSNLDA. The chain crosses the membrane as a helical span at residues 115-135; sequence AVYQVTYQLKIPCTALCTVLM. Residue 117-124 participates in CMP-N-acetyl-beta-neuraminate binding; that stretch reads YQVTYQLK. Residues 136–141 are Cytoplasmic-facing; sequence LNRTLS. The chain crosses the membrane as a helical span at residues 142 to 160; it reads KLQWVSVFMLCGGVILVQW. At 161–175 the chain is on the lumenal side; the sequence is KPAQATKVVVEQSPL. A helical membrane pass occupies residues 176 to 196; sequence LGFGAIAIAVLCSGFAGVYFE. Ser-188 contacts CMP-N-acetyl-beta-neuraminate. Residues 197 to 209 lie on the Cytoplasmic side of the membrane; sequence KVLKSSDTSLWVR. 210 to 214 contributes to the CMP-N-acetyl-beta-neuraminate binding site; it reads NIQMY. The chain crosses the membrane as a helical span at residues 210–228; the sequence is NIQMYLSGIVVTLVGTYLS. Residues 229-243 are Lumenal-facing; that stretch reads DGAEIKEKGFFYGYT. The chain crosses the membrane as a helical span at residues 244–262; sequence YYVWFVIFLASVGGLYTSV. Over 263 to 269 the chain is Cytoplasmic; sequence VVKYTDN. The chain crosses the membrane as a helical span at residues 270–288; it reads IMKGFSAAAAIVLSTIASV. Lys-272 lines the CMP-N-acetyl-beta-neuraminate pocket. Topologically, residues 289–296 are lumenal; that stretch reads MLFGLQIT. A helical transmembrane segment spans residues 297–315; the sequence is LSFAMGALLVCISIYLYGL. The Cytoplasmic portion of the chain corresponds to 316 to 336; the sequence is PRQDTTCIQQEATSKERVIGV. The disordered stretch occupies residues 316 to 336; the sequence is PRQDTTCIQQEATSKERVIGV.

The protein belongs to the nucleotide-sugar transporter family. SLC35A subfamily. Monomer.

Its subcellular location is the golgi apparatus membrane. The enzyme catalyses CMP-N-acetyl-beta-neuraminate(in) + CMP(out) = CMP-N-acetyl-beta-neuraminate(out) + CMP(in). It carries out the reaction CMP-N-acetyl-beta-neuraminate(in) + AMP(out) = CMP-N-acetyl-beta-neuraminate(out) + AMP(in). It catalyses the reaction CDP-L-ribitol(in) + CDP(out) = CDP-L-ribitol(out) + CDP(in). The catalysed reaction is UMP(out) + CMP-N-acetyl-beta-neuraminate(in) = UMP(in) + CMP-N-acetyl-beta-neuraminate(out). Its function is as follows. Transports CMP-sialic acid from the cytosol into the Golgi apparatus, functioning as an antiporter that exchanges CMP-sialic acid for CMP. Binds both CMP-sialic acid and free CMP, but has higher affinity for free CMP. Also able to exchange CMP-sialic acid for AMP and UMP. Also mediates the transport of CDP-ribitol. The chain is CMP-sialic acid transporter (SLC35A1) from Cricetulus griseus (Chinese hamster).